The chain runs to 591 residues: Aspartate--tRNA(Asp/Asn) ligase (591 aa).

E174 is a binding site for L-aspartate. The tract at residues 198–201 is aspartate; the sequence is QLFK. R220 lines the L-aspartate pocket. ATP contacts are provided by residues 220–222 and Q229; that span reads RDE. H450 is a binding site for L-aspartate. E483 provides a ligand contact to ATP. L-aspartate is bound at residue R490. 535–538 serves as a coordination point for ATP; that stretch reads GLDR.

It belongs to the class-II aminoacyl-tRNA synthetase family. Type 1 subfamily. Homodimer.

It localises to the cytoplasm. The enzyme catalyses tRNA(Asx) + L-aspartate + ATP = L-aspartyl-tRNA(Asx) + AMP + diphosphate. In terms of biological role, aspartyl-tRNA synthetase with relaxed tRNA specificity since it is able to aspartylate not only its cognate tRNA(Asp) but also tRNA(Asn). Reaction proceeds in two steps: L-aspartate is first activated by ATP to form Asp-AMP and then transferred to the acceptor end of tRNA(Asp/Asn). This Azotobacter vinelandii (strain DJ / ATCC BAA-1303) protein is Aspartate--tRNA(Asp/Asn) ligase.